The chain runs to 392 residues: Queuine tRNA-ribosyltransferase (392 aa).

The active-site Proton acceptor is Asp-92. Residues 92–96, Asp-146, Gln-188, and Gly-215 each bind substrate; that span reads DSGGF. The interval 246–252 is RNA binding; sequence GVGSPED. Asp-265 serves as the catalytic Nucleophile. An RNA binding; important for wobble base 34 recognition region spans residues 270-274; the sequence is TRLGR. Zn(2+) contacts are provided by Cys-303, Cys-305, Cys-308, and His-334.

This sequence belongs to the queuine tRNA-ribosyltransferase family. In terms of assembly, homodimer. Within each dimer, one monomer is responsible for RNA recognition and catalysis, while the other monomer binds to the replacement base PreQ1. Requires Zn(2+) as cofactor.

It carries out the reaction 7-aminomethyl-7-carbaguanine + guanosine(34) in tRNA = 7-aminomethyl-7-carbaguanosine(34) in tRNA + guanine. It participates in tRNA modification; tRNA-queuosine biosynthesis. Functionally, catalyzes the base-exchange of a guanine (G) residue with the queuine precursor 7-aminomethyl-7-deazaguanine (PreQ1) at position 34 (anticodon wobble position) in tRNAs with GU(N) anticodons (tRNA-Asp, -Asn, -His and -Tyr). Catalysis occurs through a double-displacement mechanism. The nucleophile active site attacks the C1' of nucleotide 34 to detach the guanine base from the RNA, forming a covalent enzyme-RNA intermediate. The proton acceptor active site deprotonates the incoming PreQ1, allowing a nucleophilic attack on the C1' of the ribose to form the product. After dissociation, two additional enzymatic reactions on the tRNA convert PreQ1 to queuine (Q), resulting in the hypermodified nucleoside queuosine (7-(((4,5-cis-dihydroxy-2-cyclopenten-1-yl)amino)methyl)-7-deazaguanosine). The chain is Queuine tRNA-ribosyltransferase from Herpetosiphon aurantiacus (strain ATCC 23779 / DSM 785 / 114-95).